The chain runs to 380 residues: Gibberellin 20 oxidase 3 (380 aa).

Positions 221 to 321 (DSDSIFRLNY…RKTFAFFLCP (101 aa)) constitute a Fe2OG dioxygenase domain. Fe cation-binding residues include histidine 246, aspartate 248, and histidine 302. Arginine 312 is an active-site residue.

It belongs to the iron/ascorbate-dependent oxidoreductase family. GA20OX subfamily. Fe(2+) serves as cofactor. L-ascorbate is required as a cofactor. As to expression, expressed at high level in developing siliques. Detected in seeds, roots, leaves and inflorescences. In seeds, specifically detected at the outer layer of the outer integument.

It carries out the reaction gibberellin A12 + 2 2-oxoglutarate + 3 O2 + H(+) = gibberellin A9 + 2 succinate + 3 CO2 + 2 H2O. The catalysed reaction is gibberellin A12 + 3 2-oxoglutarate + 3 O2 = gibberellin A25 + 3 succinate + 3 CO2 + H2O + H(+). The enzyme catalyses gibberellin A53 + 2 2-oxoglutarate + 3 O2 + H(+) = gibberellin A20 + 2 succinate + 3 CO2 + 2 H2O. Its pathway is plant hormone biosynthesis; gibberellin biosynthesis. Functionally, key oxidase enzyme in the biosynthesis of gibberellin that catalyzes the conversion of GA12 and GA53 to GA9 and GA20 respectively, via a three-step oxidation at C-20 of the GA skeleton, and GA25 is also formed as a minor product. GA53 is less effectively oxidized than GA12. The protein is Gibberellin 20 oxidase 3 (GA20OX3) of Arabidopsis thaliana (Mouse-ear cress).